The sequence spans 48 residues: Mating-type pheromone BAP1(2) (48 aa).

The residue at position 45 (cysteine 45) is a Cysteine methyl ester. The S-farnesyl cysteine moiety is linked to residue cysteine 45. A propeptide spans 46–48 (removed in mature form); the sequence is VRG.

The protein localises to the cell membrane. Its function is as follows. Activates B-regulated development. The sequence is that of Mating-type pheromone BAP1(2) (BAP1(2)) from Schizophyllum commune (Split gill fungus).